A 400-amino-acid chain; its full sequence is Large envelope protein (400 aa).

Met-1 bears the N-acetylmethionine mark. A disordered region spans residues 1–20 (MGGWSAKPRKGMGTNLSVPN). Residue Gly-2 is the site of N-myristoyl glycine; by host attachment. The pre-S1 stretch occupies residues 2 to 119 (GGWSAKPRKG…PPLRDSHPQA (118 aa)). The pre-S stretch occupies residues 2-174 (GGWSAKPRKG…SSRTGDPALN (173 aa)). Residues 2–181 (GGWSAKPRKG…ALNMENITSG (180 aa)) are Virion surface; in external conformation-facing. The Intravirion; in internal conformation portion of the chain corresponds to 2 to 253 (GGWSAKPRKG…PGYRWMCLRR (252 aa)). The N-linked (GlcNAc...) asparagine glycan is linked to Trp-4. The segment at 120 to 174 (MQWNSTAFQQALQDPRVRGLFFPAGGSSSGTVNPAPNIASHISSISSRTGDPALN) is pre-S2. A helical transmembrane segment spans residues 182 to 202 (FLGPLLVLQAGFFLLTRILTI). The Intravirion; in external conformation portion of the chain corresponds to 203-253 (PQSLDSWWTSLNFLGGSPVCLGQNSQSPTSNHSPTSCPPICPGYRWMCLRR). A helical membrane pass occupies residues 254–274 (FIIFLFILLLCLIFLLVLLDY). Over 275-348 (QGMLPVCPLI…WASVRFSWLS (74 aa)) the chain is Virion surface. An N-linked (GlcNAc...) asparagine; by host glycan is attached at Asn-320. The chain crosses the membrane as a helical span at residues 349–369 (LLVPFVQWFVGLSPTVWLSVI). At 370-375 (WMMWYW) the chain is on the intravirion side. Residues 376–398 (GPSLYNILSPFIPLLPIFFCLWV) traverse the membrane as a helical segment. Topologically, residues 399-400 (YI) are virion surface.

This sequence belongs to the orthohepadnavirus major surface antigen family. In terms of assembly, in its internal form (Li-HBsAg), interacts with the capsid protein and with the isoform S. Interacts with host chaperone CANX. Associates with host chaperone CANX through its pre-S2 N glycan; this association may be essential for isoform M proper secretion. As to quaternary structure, interacts with isoform L. Interacts with the antigens of satellite virus HDV (HDVAgs); this interaction is required for encapsidation of HDV genomic RNA. Isoform M is N-terminally acetylated by host at a ratio of 90%, and N-glycosylated by host at the pre-S2 region. In terms of processing, myristoylated.

It localises to the virion membrane. In terms of biological role, the large envelope protein exists in two topological conformations, one which is termed 'external' or Le-HBsAg and the other 'internal' or Li-HBsAg. In its external conformation the protein attaches the virus to cell receptors and thereby initiating infection. This interaction determines the species specificity and liver tropism. This attachment induces virion internalization predominantly through caveolin-mediated endocytosis. The large envelope protein also assures fusion between virion membrane and endosomal membrane. In its internal conformation the protein plays a role in virion morphogenesis and mediates the contact with the nucleocapsid like a matrix protein. Functionally, the middle envelope protein plays an important role in the budding of the virion. It is involved in the induction of budding in a nucleocapsid independent way. In this process the majority of envelope proteins bud to form subviral lipoprotein particles of 22 nm of diameter that do not contain a nucleocapsid. This chain is Large envelope protein, found in Hepatitis B virus genotype A1 subtype adw2 (isolate Southern-Africa/Cai) (HBV-A).